Reading from the N-terminus, the 359-residue chain is 3-dehydroquinate synthase (359 aa).

Residues 69–74, 103–107, 127–128, Lys-140, Lys-149, and 167–170 each bind NAD(+); these read DGEKYK, GVVGD, TT, and TLDT. The Zn(2+) site is built by Glu-182, His-245, and His-262.

It belongs to the sugar phosphate cyclases superfamily. Dehydroquinate synthase family. Co(2+) is required as a cofactor. Requires Zn(2+) as cofactor. It depends on NAD(+) as a cofactor.

It localises to the cytoplasm. It catalyses the reaction 7-phospho-2-dehydro-3-deoxy-D-arabino-heptonate = 3-dehydroquinate + phosphate. It participates in metabolic intermediate biosynthesis; chorismate biosynthesis; chorismate from D-erythrose 4-phosphate and phosphoenolpyruvate: step 2/7. Catalyzes the conversion of 3-deoxy-D-arabino-heptulosonate 7-phosphate (DAHP) to dehydroquinate (DHQ). This Ruthia magnifica subsp. Calyptogena magnifica protein is 3-dehydroquinate synthase.